Consider the following 371-residue polypeptide: Putative phosphoserine aminotransferase (371 aa).

L-glutamate is bound at residue R45. The pyridoxal 5'-phosphate site is built by F103, T149, D171, and Q194. K195 carries the N6-(pyridoxal phosphate)lysine modification. 246–247 (NT) lines the pyridoxal 5'-phosphate pocket.

This sequence belongs to the class-V pyridoxal-phosphate-dependent aminotransferase family. SerC subfamily. As to quaternary structure, homodimer. The cofactor is pyridoxal 5'-phosphate.

It localises to the cytoplasm. It catalyses the reaction O-phospho-L-serine + 2-oxoglutarate = 3-phosphooxypyruvate + L-glutamate. It carries out the reaction 4-(phosphooxy)-L-threonine + 2-oxoglutarate = (R)-3-hydroxy-2-oxo-4-phosphooxybutanoate + L-glutamate. Its pathway is amino-acid biosynthesis; L-serine biosynthesis; L-serine from 3-phospho-D-glycerate: step 2/3. The protein operates within cofactor biosynthesis; pyridoxine 5'-phosphate biosynthesis; pyridoxine 5'-phosphate from D-erythrose 4-phosphate: step 3/5. Functionally, catalyzes the reversible conversion of 3-phosphohydroxypyruvate to phosphoserine and of 3-hydroxy-2-oxo-4-phosphonooxybutanoate to phosphohydroxythreonine. This is Putative phosphoserine aminotransferase from Mycolicibacterium vanbaalenii (strain DSM 7251 / JCM 13017 / BCRC 16820 / KCTC 9966 / NRRL B-24157 / PYR-1) (Mycobacterium vanbaalenii).